A 530-amino-acid polypeptide reads, in one-letter code: Protein P80 (530 aa).

An N-terminal signal peptide occupies residues 1–22 (MKVISGLLFFILISCSLFLVQG). The helical transmembrane segment at 491 to 511 (MLVAMTFNVALFFAVIAGVLV) threads the bilayer.

Belongs to the SLC31A transporter family.

It localises to the late endosome membrane. This Dictyostelium discoideum (Social amoeba) protein is Protein P80 (p80).